Consider the following 380-residue polypeptide: Mitogen-activated protein kinase mpkC (380 aa).

One can recognise a Protein kinase domain in the interval 20–300; the sequence is YVNLQPIGMG…AQDALRHPYL (281 aa). ATP-binding positions include 26–34 and lysine 49; that span reads IGMGSFGLV. Residue aspartate 141 is the Proton acceptor of the active site. Threonine 171 bears the Phosphothreonine mark. The short motif at 171–173 is the TXY element; it reads TGY. Residue tyrosine 173 is modified to Phosphotyrosine.

This sequence belongs to the protein kinase superfamily. Ser/Thr protein kinase family. MAP kinase subfamily. HOG1 sub-subfamily. Requires Mg(2+) as cofactor. Post-translationally, dually phosphorylated on Thr-171 and Tyr-173, which activates the enzyme.

It carries out the reaction L-seryl-[protein] + ATP = O-phospho-L-seryl-[protein] + ADP + H(+). It catalyses the reaction L-threonyl-[protein] + ATP = O-phospho-L-threonyl-[protein] + ADP + H(+). With respect to regulation, activated by tyrosine and threonine phosphorylation. Mitogen-activated protein kinase required for growth on media where sorbitol or mannitol is the sole carbon source. This chain is Mitogen-activated protein kinase mpkC (mpkC), found in Aspergillus clavatus (strain ATCC 1007 / CBS 513.65 / DSM 816 / NCTC 3887 / NRRL 1 / QM 1276 / 107).